We begin with the raw amino-acid sequence, 955 residues long: Glycine dehydrogenase (decarboxylating) (955 aa).

Lys702 bears the N6-(pyridoxal phosphate)lysine mark.

The protein belongs to the GcvP family. As to quaternary structure, the glycine cleavage system is composed of four proteins: P, T, L and H. The cofactor is pyridoxal 5'-phosphate.

The catalysed reaction is N(6)-[(R)-lipoyl]-L-lysyl-[glycine-cleavage complex H protein] + glycine + H(+) = N(6)-[(R)-S(8)-aminomethyldihydrolipoyl]-L-lysyl-[glycine-cleavage complex H protein] + CO2. Its function is as follows. The glycine cleavage system catalyzes the degradation of glycine. The P protein binds the alpha-amino group of glycine through its pyridoxal phosphate cofactor; CO(2) is released and the remaining methylamine moiety is then transferred to the lipoamide cofactor of the H protein. The sequence is that of Glycine dehydrogenase (decarboxylating) from Bradyrhizobium diazoefficiens (strain JCM 10833 / BCRC 13528 / IAM 13628 / NBRC 14792 / USDA 110).